The chain runs to 562 residues: Probable ganciclovir kinase (562 aa).

Polar residues predominate over residues 1-16 (MDNGVETPQGQKTQPI). Residues 1–32 (MDNGVETPQGQKTQPINLPPVRKKLRKHEGLG) are disordered. ATP is bound by residues 201 to 209 (LGVGAYGKV) and lysine 218. Residue aspartate 313 is the Proton acceptor of the active site.

Belongs to the protein kinase superfamily. Tyr protein kinase family. HCMV ganciclovir subfamily.

Its function is as follows. Phosphorylates the antiviral nucleoside analog ganciclovir. This is Probable ganciclovir kinase (U69) from Homo sapiens (Human).